The sequence spans 203 residues: E3 ubiquitin-protein ligase RNF152 (203 aa).

The RING-type zinc finger occupies 12–55 (CQICFNYYSPRRRPKLLDCKHTCCSVCLQQMRTSQKDVRCPWCR). Positions 106 to 165 (ISKERALLPGDMGCRLLPGSQQKSVTVVTVPAEQRPLQGGAPQEAVEEEPDRRGVAKSST) are necessary for interaction with RRAGA. The chain crosses the membrane as a helical span at residues 167–187 (SGVCTVILVACVLVFLLGIVL).

This sequence belongs to the RNF152 family. Interacts with RRAGA (inactive GDP-bound form); stimulated by amino acid starvation. Ubiquitinated. Autoubiquitinated in vitro, leading to its degradation by the proteasome.

The protein resides in the lysosome membrane. It catalyses the reaction S-ubiquitinyl-[E2 ubiquitin-conjugating enzyme]-L-cysteine + [acceptor protein]-L-lysine = [E2 ubiquitin-conjugating enzyme]-L-cysteine + N(6)-ubiquitinyl-[acceptor protein]-L-lysine.. It functions in the pathway protein modification; protein ubiquitination. Functionally, E3 ubiquitin-protein ligase that acts as a negative regulator of mTORC1 signaling by mediating ubiquitination of RagA/RRAGA and RHEB. Catalyzes 'Lys-63'-linked polyubiquitination of RagA/RRAGA in response to amino acid starvation, thereby regulating mTORC1 signaling. Also mediates monoubiquitination of RHEB, promoting its association with the TSC-TBC complex and subsequent inhibition. Also mediates 'Lys-48'-linked polyubiquitination of target proteins and their subsequent targeting to the proteasome for degradation. Induces apoptosis when overexpressed. This is E3 ubiquitin-protein ligase RNF152 from Ailuropoda melanoleuca (Giant panda).